Here is a 412-residue protein sequence, read N- to C-terminus: [Pyruvate dehydrogenase (acetyl-transferring)] kinase isozyme 4, mitochondrial (412 aa).

A Histidine kinase domain is found at 138-368 (IIEYKDSCTV…DAIIYLKALS (231 aa)). ATP contacts are provided by residues 254–261 (ELFKNAMR), aspartate 293, 312–313 (ST), and 329–334 (GFGYGL).

It belongs to the PDK/BCKDK protein kinase family. As to quaternary structure, homodimer. Interacts with the pyruvate dehydrogenase complex subunit DLAT, and is part of the multimeric pyruvate dehydrogenase complex that contains multiple copies of pyruvate dehydrogenase (E1), dihydrolipoamide acetyltransferase (DLAT, E2) and lipoamide dehydrogenase (DLD, E3). Detected in heart, white adipose tissue and muscle.

It is found in the mitochondrion matrix. It carries out the reaction L-seryl-[pyruvate dehydrogenase E1 alpha subunit] + ATP = O-phospho-L-seryl-[pyruvate dehydrogenase E1 alpha subunit] + ADP + H(+). Functionally, kinase that plays a key role in regulation of glucose and fatty acid metabolism and homeostasis via phosphorylation of the pyruvate dehydrogenase subunits PDHA1 and PDHA2. This inhibits pyruvate dehydrogenase activity, and thereby regulates metabolite flux through the tricarboxylic acid cycle, down-regulates aerobic respiration and inhibits the formation of acetyl-coenzyme A from pyruvate. Inhibition of pyruvate dehydrogenase decreases glucose utilization and increases fat metabolism in response to prolonged fasting and starvation. Plays an important role in maintaining normal blood glucose levels under starvation, and is involved in the insulin signaling cascade. Via its regulation of pyruvate dehydrogenase activity, plays an important role in maintaining normal blood pH and in preventing the accumulation of ketone bodies under starvation. In the fed state, mediates cellular responses to glucose levels and to a high-fat diet. Regulates both fatty acid oxidation and de novo fatty acid biosynthesis. Plays a role in the generation of reactive oxygen species. Protects detached epithelial cells against anoikis. Plays a role in cell proliferation via its role in regulating carbohydrate and fatty acid metabolism. In Rhinolophus ferrumequinum (Greater horseshoe bat), this protein is [Pyruvate dehydrogenase (acetyl-transferring)] kinase isozyme 4, mitochondrial (PDK4).